Consider the following 274-residue polypeptide: Dermonecrotic toxin SdSicTox-betaIIB1bv (274 aa).

His5 is an active-site residue. Glu25 and Asp27 together coordinate Mg(2+). Residue His41 is the Nucleophile of the active site. Disulfide bonds link Cys45–Cys51 and Cys47–Cys190. Asp85 is a binding site for Mg(2+).

Belongs to the arthropod phospholipase D family. Class II subfamily. The cofactor is Mg(2+). In terms of tissue distribution, expressed by the venom gland.

Its subcellular location is the secreted. It catalyses the reaction an N-(acyl)-sphingosylphosphocholine = an N-(acyl)-sphingosyl-1,3-cyclic phosphate + choline. The catalysed reaction is an N-(acyl)-sphingosylphosphoethanolamine = an N-(acyl)-sphingosyl-1,3-cyclic phosphate + ethanolamine. It carries out the reaction a 1-acyl-sn-glycero-3-phosphocholine = a 1-acyl-sn-glycero-2,3-cyclic phosphate + choline. The enzyme catalyses a 1-acyl-sn-glycero-3-phosphoethanolamine = a 1-acyl-sn-glycero-2,3-cyclic phosphate + ethanolamine. Dermonecrotic toxins cleave the phosphodiester linkage between the phosphate and headgroup of certain phospholipids (sphingolipid and lysolipid substrates), forming an alcohol (often choline) and a cyclic phosphate. This toxin acts on sphingomyelin (SM). It may also act on ceramide phosphoethanolamine (CPE), lysophosphatidylcholine (LPC) and lysophosphatidylethanolamine (LPE), but not on lysophosphatidylserine (LPS), and lysophosphatidylglycerol (LPG). It acts by transphosphatidylation, releasing exclusively cyclic phosphate products as second products. Induces dermonecrosis, hemolysis, increased vascular permeability, edema, inflammatory response, and platelet aggregation. The polypeptide is Dermonecrotic toxin SdSicTox-betaIIB1bv (Sicarius cf. damarensis (strain GJB-2008) (Six-eyed sand spider)).